Consider the following 585-residue polypeptide: Aspartate--tRNA ligase (585 aa).

Glu169 serves as a coordination point for L-aspartate. Residues 193-196 are aspartate; that stretch reads QLFK. Residue Arg215 coordinates L-aspartate. ATP is bound by residues 215–217 and Gln224; that span reads RDE. His443 is a binding site for L-aspartate. Glu478 lines the ATP pocket. Position 485 (Arg485) interacts with L-aspartate. 530–533 is a binding site for ATP; it reads GLDR.

Belongs to the class-II aminoacyl-tRNA synthetase family. Type 1 subfamily. Homodimer.

Its subcellular location is the cytoplasm. The catalysed reaction is tRNA(Asp) + L-aspartate + ATP = L-aspartyl-tRNA(Asp) + AMP + diphosphate. Catalyzes the attachment of L-aspartate to tRNA(Asp) in a two-step reaction: L-aspartate is first activated by ATP to form Asp-AMP and then transferred to the acceptor end of tRNA(Asp). In Pseudothermotoga lettingae (strain ATCC BAA-301 / DSM 14385 / NBRC 107922 / TMO) (Thermotoga lettingae), this protein is Aspartate--tRNA ligase.